Consider the following 65-residue polypeptide: Large ribosomal subunit protein bL31 (65 aa).

Cys-16, Cys-18, Cys-36, and Cys-39 together coordinate Zn(2+).

This sequence belongs to the bacterial ribosomal protein bL31 family. Type A subfamily. As to quaternary structure, part of the 50S ribosomal subunit. It depends on Zn(2+) as a cofactor.

In terms of biological role, binds the 23S rRNA. The protein is Large ribosomal subunit protein bL31 of Carboxydothermus hydrogenoformans (strain ATCC BAA-161 / DSM 6008 / Z-2901).